Reading from the N-terminus, the 693-residue chain is Nitric oxide-associated protein 1 (693 aa).

The segment at 43–67 (RASSLGRRVPPSSTATEDYAEGPDT) is disordered. Tyr-76 is modified (phosphotyrosine). One can recognise a CP-type G domain in the interval 203 to 504 (LELVSAALRR…FYDTPGITKE (302 aa)). A disordered region spans residues 286 to 307 (GPQYPAGDEPLEEIKNQNPSSR).

It belongs to the TRAFAC class YlqF/YawG GTPase family. NOA1 subfamily. In terms of assembly, homodimer or multimer. Interacts with mitochondrial complex I, DAP3, MRPL12 and MRPS27. As to expression, expressed in tissues associated with high mitochondria content including testes, heart, liver, brain and thymus. Also expressed in various bone cell lines.

The protein localises to the mitochondrion inner membrane. In terms of biological role, involved in regulation of mitochondrial protein translation and respiration. Plays a role in mitochondria-mediated cell death. May act as a scaffolding protein or stabilizer of respiratory chain supercomplexes. Binds GTP. In Mus musculus (Mouse), this protein is Nitric oxide-associated protein 1 (Noa1).